The primary structure comprises 401 residues: NALCN channel auxiliary factor 2 (401 aa).

Residues 42 to 62 (LASLLFFTALLSDHLWLCAGG) traverse the membrane as a helical segment. Residues asparagine 77, asparagine 97, asparagine 153, and asparagine 178 are each glycosylated (N-linked (GlcNAc...) asparagine). A helical membrane pass occupies residues 362–382 (LCVLVLFLLHTFISITTLQHC).

It belongs to the NALF family.

Its subcellular location is the membrane. Functionally, probable component of the NALCN channel complex, a channel that regulates the resting membrane potential and controls neuronal excitability. This Danio rerio (Zebrafish) protein is NALCN channel auxiliary factor 2 (nalf2).